The primary structure comprises 348 residues: Spermatogenesis-associated protein 32 (348 aa).

The span at 27-36 shows a compositional bias: basic and acidic residues; it reads YHHHHHPLED. Positions 27–61 are disordered; the sequence is YHHHHHPLEDNKDEDNEMGTELSSMKPPPKVDPDP. A phosphoserine mark is found at serine 149 and serine 152. The disordered stretch occupies residues 308–329; sequence APATSPELQEDKDDSVPGTKKG. Residue threonine 330 is modified to Phosphothreonine.

In terms of assembly, interacts with syntaxin-1 and ACTB. In terms of tissue distribution, abundantly expressed in testes. Expressed in germ cells, but not in Sertoli or Leydig cells of the adult testis. Localized at the acrosomal region of the round and elongated spermatids at stages VIII-X.

This Rattus norvegicus (Rat) protein is Spermatogenesis-associated protein 32 (Spata32).